The primary structure comprises 437 residues: Protein PhoH2 (437 aa).

The PINc domain occupies 7–134 (RTYVLDTSVL…LVSKDIPLRV (128 aa)).

It in the N-terminal section; belongs to the PINc/VapC protein family. In the C-terminal section; belongs to the PhoH family. As to quaternary structure, interacts with antitoxin PhoAT. Mg(2+) serves as cofactor.

The enzyme catalyses n ATP + n H2O + wound RNA = n ADP + n phosphate + unwound RNA.. The catalysed reaction is ATP + H2O = ADP + phosphate + H(+). It catalyses the reaction GTP + H2O = GDP + phosphate + H(+). Toxic component of a type II toxin-antitoxin (TA) system. The possible cognate antitoxin is PhoAT; the toxin gene can be expressed in the absence of the antitoxin gene in an endogenous mc(2)155 double deletion. Unwinds and/or cleaves 5'-tailed RNA in vitro that starts with 5'-AC, the reaction requires hydrolyzable ATP; double-stranded (ds)RNA and dsDNA are not unwound or cleaved. Has ATPase and GTPase activities. This is Protein PhoH2 from Mycolicibacterium smegmatis (strain ATCC 700084 / mc(2)155) (Mycobacterium smegmatis).